The primary structure comprises 284 residues: Polyamine aminopropyltransferase (284 aa).

A PABS domain is found at 2–237 (ELWYTEQHTE…GHWLFGFASK (236 aa)). Q31 provides a ligand contact to S-methyl-5'-thioadenosine. Spermidine is bound by residues H62 and D86. S-methyl-5'-thioadenosine is bound by residues E106 and 137–138 (DG). D155 functions as the Proton acceptor in the catalytic mechanism. 155-158 (DSTD) serves as a coordination point for spermidine. P162 lines the S-methyl-5'-thioadenosine pocket.

It belongs to the spermidine/spermine synthase family. In terms of assembly, homodimer or homotetramer.

It localises to the cytoplasm. The catalysed reaction is S-adenosyl 3-(methylsulfanyl)propylamine + putrescine = S-methyl-5'-thioadenosine + spermidine + H(+). Its pathway is amine and polyamine biosynthesis; spermidine biosynthesis; spermidine from putrescine: step 1/1. Its function is as follows. Catalyzes the irreversible transfer of a propylamine group from the amino donor S-adenosylmethioninamine (decarboxy-AdoMet) to putrescine (1,4-diaminobutane) to yield spermidine. This is Polyamine aminopropyltransferase from Clostridium beijerinckii (strain ATCC 51743 / NCIMB 8052) (Clostridium acetobutylicum).